A 327-amino-acid polypeptide reads, in one-letter code: GMP reductase (327 aa).

Cys-176 (thioimidate intermediate) is an active-site residue. Position 205–228 (205–228 (IIADGGIRTHGDIAKSIRFGASMV)) interacts with NADP(+).

It belongs to the IMPDH/GMPR family. GuaC type 2 subfamily.

It catalyses the reaction IMP + NH4(+) + NADP(+) = GMP + NADPH + 2 H(+). Its function is as follows. Catalyzes the irreversible NADPH-dependent deamination of GMP to IMP. It functions in the conversion of nucleobase, nucleoside and nucleotide derivatives of G to A nucleotides, and in maintaining the intracellular balance of A and G nucleotides. This Streptococcus pyogenes serotype M3 (strain ATCC BAA-595 / MGAS315) protein is GMP reductase.